The following is a 100-amino-acid chain: Urease subunit gamma (100 aa).

The protein belongs to the urease gamma subunit family. In terms of assembly, heterotrimer of UreA (gamma), UreB (beta) and UreC (alpha) subunits. Three heterotrimers associate to form the active enzyme.

The protein localises to the cytoplasm. It carries out the reaction urea + 2 H2O + H(+) = hydrogencarbonate + 2 NH4(+). Its pathway is nitrogen metabolism; urea degradation; CO(2) and NH(3) from urea (urease route): step 1/1. The protein is Urease subunit gamma of Trichormus variabilis (strain ATCC 29413 / PCC 7937) (Anabaena variabilis).